Consider the following 463-residue polypeptide: Ataxin-10 homolog (463 aa).

Belongs to the ataxin-10 family.

The protein localises to the cytoplasm. Functionally, may play a role in the regulation of cytokinesis. In Candida albicans (strain SC5314 / ATCC MYA-2876) (Yeast), this protein is Ataxin-10 homolog (CTR86).